The primary structure comprises 779 residues: Molybdenum cofactor sulfurase (779 aa).

Lysine 247 is modified (N6-(pyridoxal phosphate)lysine). Residue cysteine 409 is part of the active site. The 156-residue stretch at 624–779 folds into the MOSC domain; the sequence is SQSLGLEGVR…LTCGDVIVVS (156 aa). Position 732 is a phosphoserine (serine 732).

It belongs to the class-V pyridoxal-phosphate-dependent aminotransferase family. MOCOS subfamily. Requires pyridoxal 5'-phosphate as cofactor.

It catalyses the reaction Mo-molybdopterin + L-cysteine + AH2 = thio-Mo-molybdopterin + L-alanine + A + H2O. Its pathway is cofactor biosynthesis; molybdopterin biosynthesis. Functionally, sulfurates the molybdenum cofactor. Sulfation of molybdenum is essential for xanthine dehydrogenase (XDH) and aldehyde oxidase (ADO) enzymes in which molybdenum cofactor is liganded by 1 oxygen and 1 sulfur atom in active form. The sequence is that of Molybdenum cofactor sulfurase from Drosophila mojavensis (Fruit fly).